The primary structure comprises 208 residues: Ribosomal RNA large subunit methyltransferase E (208 aa).

G63, W65, D83, D99, and D124 together coordinate S-adenosyl-L-methionine. K164 functions as the Proton acceptor in the catalytic mechanism.

It belongs to the class I-like SAM-binding methyltransferase superfamily. RNA methyltransferase RlmE family.

Its subcellular location is the cytoplasm. It carries out the reaction uridine(2552) in 23S rRNA + S-adenosyl-L-methionine = 2'-O-methyluridine(2552) in 23S rRNA + S-adenosyl-L-homocysteine + H(+). Specifically methylates the uridine in position 2552 of 23S rRNA at the 2'-O position of the ribose in the fully assembled 50S ribosomal subunit. This chain is Ribosomal RNA large subunit methyltransferase E, found in Salmonella paratyphi A (strain ATCC 9150 / SARB42).